A 90-amino-acid polypeptide reads, in one-letter code: MARTVHCIKLNKEAEGLDFPPLPGELGKKIWQSVSKEAWAGWLKHQTMLINENRLNMADARARQYLLKQTEKYFFGEGADQAQGYVPPQS.

The protein belongs to the Fe(2+)-trafficking protein family.

In terms of biological role, could be a mediator in iron transactions between iron acquisition and iron-requiring processes, such as synthesis and/or repair of Fe-S clusters in biosynthetic enzymes. This chain is Probable Fe(2+)-trafficking protein, found in Cupriavidus taiwanensis (strain DSM 17343 / BCRC 17206 / CCUG 44338 / CIP 107171 / LMG 19424 / R1) (Ralstonia taiwanensis (strain LMG 19424)).